The primary structure comprises 445 residues: Exodeoxyribonuclease 7 large subunit (445 aa).

This sequence belongs to the XseA family. As to quaternary structure, heterooligomer composed of large and small subunits.

It is found in the cytoplasm. It carries out the reaction Exonucleolytic cleavage in either 5'- to 3'- or 3'- to 5'-direction to yield nucleoside 5'-phosphates.. Functionally, bidirectionally degrades single-stranded DNA into large acid-insoluble oligonucleotides, which are then degraded further into small acid-soluble oligonucleotides. The chain is Exodeoxyribonuclease 7 large subunit from Staphylococcus epidermidis (strain ATCC 12228 / FDA PCI 1200).